We begin with the raw amino-acid sequence, 39 residues long: Omega-actinopoditoxin-Mb1a (39 aa).

3 disulfide bridges follow: Cys4–Cys19, Cys11–Cys30, and Cys18–Cys38.

Post-translationally, contains 3 disulfide bonds. In terms of tissue distribution, expressed by the venom gland.

The protein resides in the secreted. Functionally, potent inhibitor of insect, but not mammalian, voltage-gated calcium channels (Cav). The polypeptide is Omega-actinopoditoxin-Mb1a (Missulena bradleyi (Eastern mouse spider)).